The sequence spans 613 residues: Dihydroxy-acid dehydratase (613 aa).

Aspartate 81 provides a ligand contact to Mg(2+). A [2Fe-2S] cluster-binding site is contributed by cysteine 122. Mg(2+) is bound by residues aspartate 123 and lysine 124. The residue at position 124 (lysine 124) is an N6-carboxylysine. Cysteine 195 serves as a coordination point for [2Fe-2S] cluster. Glutamate 491 provides a ligand contact to Mg(2+). The Proton acceptor role is filled by serine 517.

It belongs to the IlvD/Edd family. Homodimer. The cofactor is [2Fe-2S] cluster. Requires Mg(2+) as cofactor.

The catalysed reaction is (2R)-2,3-dihydroxy-3-methylbutanoate = 3-methyl-2-oxobutanoate + H2O. The enzyme catalyses (2R,3R)-2,3-dihydroxy-3-methylpentanoate = (S)-3-methyl-2-oxopentanoate + H2O. It functions in the pathway amino-acid biosynthesis; L-isoleucine biosynthesis; L-isoleucine from 2-oxobutanoate: step 3/4. The protein operates within amino-acid biosynthesis; L-valine biosynthesis; L-valine from pyruvate: step 3/4. Its function is as follows. Functions in the biosynthesis of branched-chain amino acids. Catalyzes the dehydration of (2R,3R)-2,3-dihydroxy-3-methylpentanoate (2,3-dihydroxy-3-methylvalerate) into 2-oxo-3-methylpentanoate (2-oxo-3-methylvalerate) and of (2R)-2,3-dihydroxy-3-methylbutanoate (2,3-dihydroxyisovalerate) into 2-oxo-3-methylbutanoate (2-oxoisovalerate), the penultimate precursor to L-isoleucine and L-valine, respectively. This chain is Dihydroxy-acid dehydratase, found in Vibrio vulnificus (strain CMCP6).